The following is a 275-amino-acid chain: Chemotaxis protein methyltransferase 1 (275 aa).

The region spanning 1–275 is the CheR-type methyltransferase domain; it reads MTAITISDQE…CNPGIIYKLK (275 aa). S-adenosyl-L-methionine contacts are provided by residues Asn-76, Thr-78, Arg-82, Glu-117, Asp-145, 201 to 202, and 218 to 219; these read NL and RN.

It catalyses the reaction L-glutamyl-[protein] + S-adenosyl-L-methionine = [protein]-L-glutamate 5-O-methyl ester + S-adenosyl-L-homocysteine. Functionally, methylation of the membrane-bound methyl-accepting chemotaxis proteins (MCP) to form gamma-glutamyl methyl ester residues in MCP. The sequence is that of Chemotaxis protein methyltransferase 1 (cheR1) from Vibrio cholerae serotype O1 (strain ATCC 39315 / El Tor Inaba N16961).